The following is a 520-amino-acid chain: Glutamate--cysteine ligase (520 aa).

The protein belongs to the glutamate--cysteine ligase type 1 family. Type 1 subfamily.

It catalyses the reaction L-cysteine + L-glutamate + ATP = gamma-L-glutamyl-L-cysteine + ADP + phosphate + H(+). It participates in sulfur metabolism; glutathione biosynthesis; glutathione from L-cysteine and L-glutamate: step 1/2. In Serratia proteamaculans (strain 568), this protein is Glutamate--cysteine ligase.